A 151-amino-acid polypeptide reads, in one-letter code: Sec-independent protein translocase protein TatB (151 aa).

The chain crosses the membrane as a helical span at residues 1–21 (MFGMSLPEIIIIAVIAVIFLG). A compositionally biased stretch (low complexity) spans 120–131 (NNDPLNNETLNE). The tract at residues 120–151 (NNDPLNNETLNEQPSKPSPNLNLENKEIKKEA) is disordered. Positions 132-142 (QPSKPSPNLNL) are enriched in polar residues.

Belongs to the TatB family. In terms of assembly, the Tat system comprises two distinct complexes: a TatABC complex, containing multiple copies of TatA, TatB and TatC subunits, and a separate TatA complex, containing only TatA subunits. Substrates initially bind to the TatABC complex, which probably triggers association of the separate TatA complex to form the active translocon.

It is found in the cell inner membrane. Its function is as follows. Part of the twin-arginine translocation (Tat) system that transports large folded proteins containing a characteristic twin-arginine motif in their signal peptide across membranes. Together with TatC, TatB is part of a receptor directly interacting with Tat signal peptides. TatB may form an oligomeric binding site that transiently accommodates folded Tat precursor proteins before their translocation. This is Sec-independent protein translocase protein TatB from Campylobacter fetus subsp. fetus (strain 82-40).